We begin with the raw amino-acid sequence, 355 residues long: UDP-N-acetylglucosamine--N-acetylmuramyl-(pentapeptide) pyrophosphoryl-undecaprenol N-acetylglucosamine transferase (355 aa).

Residues 15-17 (TGG), Asn127, Arg163, Ser191, Ile244, 263-268 (ALTVSE), and Gln288 each bind UDP-N-acetyl-alpha-D-glucosamine.

This sequence belongs to the glycosyltransferase 28 family. MurG subfamily.

Its subcellular location is the cell inner membrane. It catalyses the reaction di-trans,octa-cis-undecaprenyl diphospho-N-acetyl-alpha-D-muramoyl-L-alanyl-D-glutamyl-meso-2,6-diaminopimeloyl-D-alanyl-D-alanine + UDP-N-acetyl-alpha-D-glucosamine = di-trans,octa-cis-undecaprenyl diphospho-[N-acetyl-alpha-D-glucosaminyl-(1-&gt;4)]-N-acetyl-alpha-D-muramoyl-L-alanyl-D-glutamyl-meso-2,6-diaminopimeloyl-D-alanyl-D-alanine + UDP + H(+). It participates in cell wall biogenesis; peptidoglycan biosynthesis. In terms of biological role, cell wall formation. Catalyzes the transfer of a GlcNAc subunit on undecaprenyl-pyrophosphoryl-MurNAc-pentapeptide (lipid intermediate I) to form undecaprenyl-pyrophosphoryl-MurNAc-(pentapeptide)GlcNAc (lipid intermediate II). This chain is UDP-N-acetylglucosamine--N-acetylmuramyl-(pentapeptide) pyrophosphoryl-undecaprenol N-acetylglucosamine transferase, found in Salmonella newport (strain SL254).